A 61-amino-acid polypeptide reads, in one-letter code: MAKKSMIIKQKRTPKFKVRAYTRCERCGRPHSVYRKFKLCRICFRELAYKGQLPGIKKASW.

The Zn(2+) site is built by cysteine 24, cysteine 27, cysteine 40, and cysteine 43.

The protein belongs to the universal ribosomal protein uS14 family. Zinc-binding uS14 subfamily. In terms of assembly, part of the 30S ribosomal subunit. Contacts proteins S3 and S10. Requires Zn(2+) as cofactor.

In terms of biological role, binds 16S rRNA, required for the assembly of 30S particles and may also be responsible for determining the conformation of the 16S rRNA at the A site. In Geobacillus stearothermophilus (Bacillus stearothermophilus), this protein is Small ribosomal subunit protein uS14.